Consider the following 409-residue polypeptide: Na(+)-translocating NADH-quinone reductase subunit F (409 aa).

The helical transmembrane segment at 5 to 25 (FIFGIGAFTAIVLVLAVVILI) threads the bilayer. The 2Fe-2S ferredoxin-type domain occupies 34 to 128 (GDITISINND…SMDVELPEEV (95 aa)). Residues Cys-71, Cys-77, Cys-80, and Cys-112 each contribute to the [2Fe-2S] cluster site. Positions 131–271 (VKKWECTVIS…SGPFGEFFAK (141 aa)) constitute an FAD-binding FR-type domain.

Belongs to the NqrF family. Composed of six subunits; NqrA, NqrB, NqrC, NqrD, NqrE and NqrF. The cofactor is [2Fe-2S] cluster. Requires FAD as cofactor.

It is found in the cell inner membrane. It carries out the reaction a ubiquinone + n Na(+)(in) + NADH + H(+) = a ubiquinol + n Na(+)(out) + NAD(+). NQR complex catalyzes the reduction of ubiquinone-1 to ubiquinol by two successive reactions, coupled with the transport of Na(+) ions from the cytoplasm to the periplasm. The first step is catalyzed by NqrF, which accepts electrons from NADH and reduces ubiquinone-1 to ubisemiquinone by a one-electron transfer pathway. The polypeptide is Na(+)-translocating NADH-quinone reductase subunit F (Mannheimia succiniciproducens (strain KCTC 0769BP / MBEL55E)).